The sequence spans 380 residues: UPF0754 membrane protein Bsph_0374 (380 aa).

2 helical membrane passes run 1–21 and 357–377; these read MDNF…IGGV and MITV…GLIV.

It belongs to the UPF0754 family.

The protein resides in the cell membrane. The protein is UPF0754 membrane protein Bsph_0374 of Lysinibacillus sphaericus (strain C3-41).